The sequence spans 439 residues: Elongation factor Tu, mitochondrial (439 aa).

Residues 51 to 246 (KPHVNIGTIG…AVDSYITLPE (196 aa)) form the tr-type G domain. The interval 60–67 (GHVDHGKT) is G1. Residue 60–67 (GHVDHGKT) coordinates GTP. Positions 101-105 (GITIS) are G2. Residues 122-125 (DCPG) are G3. Residues 122–126 (DCPGH) and 177–180 (NKVD) each bind GTP. The tract at residues 177–180 (NKVD) is G4. The tract at residues 214–216 (SAL) is G5.

This sequence belongs to the TRAFAC class translation factor GTPase superfamily. Classic translation factor GTPase family. EF-Tu/EF-1A subfamily.

It is found in the mitochondrion. In terms of biological role, this protein promotes the GTP-dependent binding of aminoacyl-tRNA to the A-site of ribosomes during protein biosynthesis. The protein is Elongation factor Tu, mitochondrial (tuf1) of Schizosaccharomyces pombe (strain 972 / ATCC 24843) (Fission yeast).